The following is a 232-amino-acid chain: A-type ATP synthase subunit D (232 aa).

A disordered region spans residues K200 to D232. Residues E209–D222 show a composition bias toward acidic residues.

This sequence belongs to the V-ATPase D subunit family. As to quaternary structure, has multiple subunits with at least A(3), B(3), C, D, E, F, H, I and proteolipid K(x).

The protein resides in the cell membrane. In terms of biological role, component of the A-type ATP synthase that produces ATP from ADP in the presence of a proton gradient across the membrane. The polypeptide is A-type ATP synthase subunit D (Haloquadratum walsbyi (strain DSM 16790 / HBSQ001)).